We begin with the raw amino-acid sequence, 147 residues long: MVHLTDAEKAAVSCLWGKVNSDEVGGEALGRLLVVYPWTQRYFDSFGDLSSASAIMGNAKVKAHGKKVITAFNDGLNHLDSLKGTFASLSELHCDKLHVDPENFRLLGNMIVIVLGHHLGKDFTPAAQAAFQKVVAGVATALAHKYH.

An N-acetylvaline modification is found at V2. The Globin domain maps to H3–H147. The residue at position 18 (K18) is an N6-succinyllysine. A phosphoserine mark is found at S21, S45, and S51. N6-succinyllysine is present on K60. Heme b contacts are provided by H64 and H93. An Asymmetric dimethylarginine modification is found at R105. The residue at position 124 (T124) is a Phosphothreonine.

It belongs to the globin family. Heterotetramer of two alpha chains and two beta chains. In terms of tissue distribution, red blood cells.

Involved in oxygen transport from the lung to the various peripheral tissues. The polypeptide is Hemoglobin subunit beta-1 (Hbb-b1) (Mus musculus (Mouse)).